The chain runs to 315 residues: Methionyl-tRNA formyltransferase (315 aa).

113-116 (SILP) provides a ligand contact to (6S)-5,6,7,8-tetrahydrofolate.

This sequence belongs to the Fmt family.

The catalysed reaction is L-methionyl-tRNA(fMet) + (6R)-10-formyltetrahydrofolate = N-formyl-L-methionyl-tRNA(fMet) + (6S)-5,6,7,8-tetrahydrofolate + H(+). Functionally, attaches a formyl group to the free amino group of methionyl-tRNA(fMet). The formyl group appears to play a dual role in the initiator identity of N-formylmethionyl-tRNA by promoting its recognition by IF2 and preventing the misappropriation of this tRNA by the elongation apparatus. This chain is Methionyl-tRNA formyltransferase, found in Vibrio parahaemolyticus serotype O3:K6 (strain RIMD 2210633).